Consider the following 373-residue polypeptide: 3 beta-hydroxysteroid dehydrogenase/Delta 5--&gt;4-isomerase type 1 (373 aa).

NADP(+) contacts are provided by residues 10 to 15 (GAGGFV), Y155, and K159. Catalysis depends on K159, which acts as the Proton donor. The helical transmembrane segment at 288 to 308 (LPLLYWLAFLLETVSFLLRPV) threads the bilayer.

Belongs to the 3-beta-HSD family. In terms of tissue distribution, steroidogenic tissues (includes testes, ovaries and adrenal glands).

It localises to the endoplasmic reticulum membrane. The protein resides in the mitochondrion membrane. The catalysed reaction is a 3beta-hydroxy-Delta(5)-steroid + NAD(+) = a 3-oxo-Delta(5)-steroid + NADH + H(+). The enzyme catalyses pregnenolone + NAD(+) = pregn-5-ene-3,20-dione + NADH + H(+). It carries out the reaction 3beta-hydroxyandrost-5-en-17-one + NAD(+) = androst-5-ene-3,17-dione + NADH + H(+). It catalyses the reaction androst-5-en-3beta,17beta-diol + NAD(+) = 17beta-hydroxy-androst-5-en-3-one + NADH + H(+). The catalysed reaction is a 3beta-hydroxysteroid + NADP(+) = a 3-oxosteroid + NADPH + H(+). The enzyme catalyses 5alpha-androstane-3beta,17beta-diol + NADP(+) = 17beta-hydroxy-5alpha-androstan-3-one + NADPH + H(+). It carries out the reaction 3beta-hydroxy-5alpha-androstan-17-one + NADP(+) = 5alpha-androstan-3,17-dione + NADPH + H(+). It catalyses the reaction a 3-oxo-Delta(5)-steroid = a 3-oxo-Delta(4)-steroid. The catalysed reaction is pregn-5-ene-3,20-dione = progesterone. The enzyme catalyses androst-5-ene-3,17-dione = androst-4-ene-3,17-dione. It carries out the reaction 17beta-hydroxy-androst-5-en-3-one = testosterone. It catalyses the reaction 5alpha-androstane-3beta,17beta-diol + NAD(+) = 17beta-hydroxy-5alpha-androstan-3-one + NADH + H(+). The protein operates within steroid hormone biosynthesis. It participates in steroid metabolism. Its function is as follows. A bifunctional enzyme responsible for the oxidation and isomerization of 3beta-hydroxy-Delta(5)-steroid precursors to 3-oxo-Delta(4)-steroids, an essential step in steroid hormone biosynthesis. Specifically catalyzes the conversion of pregnenolone to progesterone, 17alpha-hydroxypregnenolone to 17alpha-hydroxyprogesterone, dehydroepiandrosterone (DHEA) to 4-androstenedione, and androstenediol to testosterone. Additionally, catalyzes the interconversion between 3beta-hydroxy and 3-oxo-5alpha-androstane steroids controlling the bioavalability of the active forms. Specifically converts dihydrotestosterone to its inactive form 5alpha-androstanediol, that does not bind androgen receptor/AR. Also converts androstanedione, a precursor of testosterone and estrone, to epiandrosterone. Expected to use NAD(+) as preferred electron donor for the 3-beta-hydroxy-steroid dehydrogenase activity and NADPH for the 3-ketosteroid reductase activity. The protein is 3 beta-hydroxysteroid dehydrogenase/Delta 5--&gt;4-isomerase type 1 of Mus musculus (Mouse).